The following is a 33-amino-acid chain: Putative tumor antigen NA88-A (33 aa).

Expressed in testis and melanoma cell lines.

The chain is Putative tumor antigen NA88-A (VENTXP1) from Homo sapiens (Human).